Consider the following 159-residue polypeptide: Phosphopantetheine adenylyltransferase (159 aa).

Thr10 is a substrate binding site. ATP-binding positions include 10–11 (TF) and His18. 3 residues coordinate substrate: Lys42, Leu74, and Arg88. ATP-binding positions include 89-91 (GMR), Glu99, and 124-130 (WSYVSST).

It belongs to the bacterial CoaD family. Homohexamer. Requires Mg(2+) as cofactor.

It localises to the cytoplasm. The catalysed reaction is (R)-4'-phosphopantetheine + ATP + H(+) = 3'-dephospho-CoA + diphosphate. Its pathway is cofactor biosynthesis; coenzyme A biosynthesis; CoA from (R)-pantothenate: step 4/5. In terms of biological role, reversibly transfers an adenylyl group from ATP to 4'-phosphopantetheine, yielding dephospho-CoA (dPCoA) and pyrophosphate. In Mannheimia succiniciproducens (strain KCTC 0769BP / MBEL55E), this protein is Phosphopantetheine adenylyltransferase.